A 358-amino-acid polypeptide reads, in one-letter code: Alanine racemase (358 aa).

The active-site Proton acceptor; specific for D-alanine is the Lys-34. Lys-34 carries the post-translational modification N6-(pyridoxal phosphate)lysine. Arg-130 lines the substrate pocket. Tyr-254 serves as the catalytic Proton acceptor; specific for L-alanine. Met-302 serves as a coordination point for substrate.

The protein belongs to the alanine racemase family. Requires pyridoxal 5'-phosphate as cofactor.

It carries out the reaction L-alanine = D-alanine. It functions in the pathway amino-acid biosynthesis; D-alanine biosynthesis; D-alanine from L-alanine: step 1/1. Functionally, catalyzes the interconversion of L-alanine and D-alanine. May also act on other amino acids. In Actinobacillus succinogenes (strain ATCC 55618 / DSM 22257 / CCUG 43843 / 130Z), this protein is Alanine racemase (alr).